The primary structure comprises 376 residues: 23S rRNA (uracil(747)-C(5))-methyltransferase RlmC (376 aa).

[4Fe-4S] cluster contacts are provided by Cys-3, Cys-11, Cys-14, and Cys-87. Residues Gln-212, Phe-241, Glu-262, and Asn-307 each contribute to the S-adenosyl-L-methionine site. Cys-334 functions as the Nucleophile in the catalytic mechanism.

This sequence belongs to the class I-like SAM-binding methyltransferase superfamily. RNA M5U methyltransferase family. RlmC subfamily.

It carries out the reaction uridine(747) in 23S rRNA + S-adenosyl-L-methionine = 5-methyluridine(747) in 23S rRNA + S-adenosyl-L-homocysteine + H(+). Catalyzes the formation of 5-methyl-uridine at position 747 (m5U747) in 23S rRNA. The polypeptide is 23S rRNA (uracil(747)-C(5))-methyltransferase RlmC (Salmonella newport (strain SL254)).